The chain runs to 390 residues: MEDPTLYIVERPLPGYPDAEAPEPSSAGAQAAEEPSGAGSEELIKSDQVNGVLVLSLLDKIIGAVDQIQLTQAQLEERQAEMEGAVQSIQGELSKLGKAHATTSNTVSKLLEKVRKVSVNVKTVRGSLERQAGQIKKLEVNEAELLRRRNFKVMIYQDEVKLPAKLSISKSLKESEALPEKEGEELGEGERPEEDAAALELSSDEAVEVEEVIEESRAERIKRSGLRRVDDFKKAFSKEKMEKTKVRTRENLEKTRLKTKENLEKTRHTLEKRMNKLGTRLVPAERREKLKTSRDKLRKSFTPDHVVYARSKTAVYKVPPFTFHVKKIREGQVEVLKATEMVEVGADDDEGGAERGEAGDLRRGSSPDVHALLEITEESDAVLVDKSDSD.

Residue M1 is modified to N-acetylmethionine. A disordered region spans residues 1–40; that stretch reads MEDPTLYIVERPLPGYPDAEAPEPSSAGAQAAEEPSGAGS. A required for homotrimerization and for interaction with CAVIN2 and CAVIN3 region spans residues 1-98; it reads MEDPTLYIVE…IQGELSKLGK (98 aa). The segment covering 22–40 has biased composition (low complexity); the sequence is PEPSSAGAQAAEEPSGAGS. S36, S40, and S46 each carry phosphoserine. The nuclear export signal stretch occupies residues 52-62; the sequence is VLVLSLLDKII. Positions 53–75 are leucine-zipper 1; it reads LVLSLLDKIIGAVDQIQLTQAQL. K116 participates in a covalent cross-link: Glycyl lysine isopeptide (Lys-Gly) (interchain with G-Cter in SUMO2). S118 is modified (phosphoserine). Residue K122 forms a Glycyl lysine isopeptide (Lys-Gly) (interchain with G-Cter in SUMO2) linkage. Positions 136–152 are nuclear localization signal; the sequence is KKLEVNEAELLRRRNFK. Y156 is subject to Phosphotyrosine. K161 participates in a covalent cross-link: Glycyl lysine isopeptide (Lys-Gly) (interchain with G-Cter in SUMO1); alternate. K161 participates in a covalent cross-link: Glycyl lysine isopeptide (Lys-Gly) (interchain with G-Cter in SUMO2); alternate. K165 is covalently cross-linked (Glycyl lysine isopeptide (Lys-Gly) (interchain with G-Cter in SUMO2)). The interval 166-186 is leucine-zipper 2; that stretch reads LSISKSLKESEALPEKEGEEL. S167 and S169 each carry phosphoserine. K170 participates in a covalent cross-link: Glycyl lysine isopeptide (Lys-Gly) (interchain with G-Cter in SUMO2). Phosphoserine occurs at positions 171 and 175. Residues 172 to 181 show a composition bias toward basic and acidic residues; the sequence is LKESEALPEK. A disordered region spans residues 172 to 201; the sequence is LKESEALPEKEGEELGEGERPEEDAAALEL. Positions 182–201 are enriched in acidic residues; it reads EGEELGEGERPEEDAAALEL. Positions 199–282 form a coiled coil; the sequence is LELSSDEAVE…RMNKLGTRLV (84 aa). Phosphoserine is present on residues S202 and S203. The tract at residues 233–249 is nuclear localization signal; it reads KKAFSKEKMEKTKVRTR. Residues 257-297 are leucine-zipper 3; the sequence is LKTKENLEKTRHTLEKRMNKLGTRLVPAERREKLKTSRDKL. Residue S300 is modified to Phosphoserine. At T302 the chain carries Phosphothreonine. The residue at position 308 (Y308) is a Phosphotyrosine. A Glycyl lysine isopeptide (Lys-Gly) (interchain with G-Cter in SUMO2) cross-link involves residue K326. The interval 344-366 is disordered; it reads VGADDDEGGAERGEAGDLRRGSS. A compositionally biased stretch (basic and acidic residues) spans 352-365; it reads GAERGEAGDLRRGS. Residues S365, S366, S379, S387, and S389 each carry the phosphoserine modification.

The protein belongs to the CAVIN family. As to quaternary structure, component of the CAVIN complex composed of CAVIN1, CAVIN2, CAVIN3 and CAVIN4. Homotrimer. Interacts with TTF1. Interacts with RNA polymerase I subunit POLR1A/RPA1. Binds the 3' end of pre-rRNA. Interacts with transcription factor ZNF148. Interacts with LIPE in the adipocyte cytoplasm. Interacts with CAV1 and CAVIN3. Interacts with CAVIN2. Interacts with CAVIN4 and CAV3. Post-translationally, phosphorylated. Present in active and inactive forms. Changes in phosphorylation pattern may alter activity. Phosphorylation at Tyr-156 is essential for its functionin the regulation of ribosomal transcriptional activity. In terms of processing, five truncated forms are found in the caveolae. These are thought to be the result of proteolysis and may be phosphorylation-dependent. Monoubiquitinated.

It is found in the membrane. The protein localises to the caveola. It localises to the cell membrane. Its subcellular location is the microsome. The protein resides in the endoplasmic reticulum. It is found in the cytoplasm. The protein localises to the cytosol. It localises to the mitochondrion. Its subcellular location is the nucleus. Functionally, plays an important role in caveolae formation and organization. Essential for the formation of caveolae in all tissues. Core component of the CAVIN complex which is essential for recruitment of the complex to the caveolae in presence of calveolin-1 (CAV1). Essential for normal oligomerization of CAV1. Promotes ribosomal transcriptional activity in response to metabolic challenges in the adipocytes and plays an important role in the formation of the ribosomal transcriptional loop. Dissociates transcription complexes paused by DNA-bound TTF1, thereby releasing both RNA polymerase I and pre-RNA from the template. The caveolae biogenesis pathway is required for the secretion of proteins such as GASK1A. The protein is Caveolae-associated protein 1 of Homo sapiens (Human).